The chain runs to 122 residues: Large ribosomal subunit protein uL14 (122 aa).

This sequence belongs to the universal ribosomal protein uL14 family. In terms of assembly, part of the 50S ribosomal subunit. Forms a cluster with proteins L3 and L19. In the 70S ribosome, L14 and L19 interact and together make contacts with the 16S rRNA in bridges B5 and B8.

Binds to 23S rRNA. Forms part of two intersubunit bridges in the 70S ribosome. The chain is Large ribosomal subunit protein uL14 from Carboxydothermus hydrogenoformans (strain ATCC BAA-161 / DSM 6008 / Z-2901).